A 191-amino-acid chain; its full sequence is Potassium-transporting ATPase KdpC subunit (191 aa).

Residues 6-26 form a helical membrane-spanning segment; it reads PAILLFILLTLVTGGLYPLLT.

The protein belongs to the KdpC family. In terms of assembly, the system is composed of three essential subunits: KdpA, KdpB and KdpC.

The protein localises to the cell inner membrane. Part of the high-affinity ATP-driven potassium transport (or Kdp) system, which catalyzes the hydrolysis of ATP coupled with the electrogenic transport of potassium into the cytoplasm. This subunit acts as a catalytic chaperone that increases the ATP-binding affinity of the ATP-hydrolyzing subunit KdpB by the formation of a transient KdpB/KdpC/ATP ternary complex. The protein is Potassium-transporting ATPase KdpC subunit of Enterobacter sp. (strain 638).